The sequence spans 143 residues: Large ribosomal subunit protein uL11 (143 aa).

The protein belongs to the universal ribosomal protein uL11 family. In terms of assembly, part of the ribosomal stalk of the 50S ribosomal subunit. Interacts with L10 and the large rRNA to form the base of the stalk. L10 forms an elongated spine to which L12 dimers bind in a sequential fashion forming a multimeric L10(L12)X complex. In terms of processing, one or more lysine residues are methylated.

Forms part of the ribosomal stalk which helps the ribosome interact with GTP-bound translation factors. The polypeptide is Large ribosomal subunit protein uL11 (Ralstonia pickettii (strain 12J)).